The sequence spans 880 residues: MKPLKPLTGAQIRQMYLDFFQSKGHAIEPSASLVPIEDPTLLWINSGVATLKKYFDGRVIPQNPRIVNAQKSIRTNDIENVGKTARHHTFFEMLGNFSVGDYFREDAIKWGWELLTSDEWYGLDPDRLSVTIHPEDDAARQIWLELGVPAERIIPLEDNFWEIGEGPSGPNTEIFFDRGPAFGDDPNDSELYPGGENERYLEIWNIVFSQYNHDGHGNYTELPRKNIDTGMGLERMASVMQDVPTNFDTDLFMPIIHKTEEISGKRYREDTKLDVAFKVIADHIRTVAFAIGDGALPSNEGRGYVLRRLLRRAVRYAKMLGIERPFMYELVDTVGSVMVDFYPQVPEKADFIKRVIKNEEERFHETLHDGLAILNTVAQAAKNNGEHIISGEDAFRLYDTYGFPLELTVEYAEDHQMSVDEEGFKRAMDEQRKRARAAREDGGSMQQQSEVLATLTVPSQFVGYTDLEADAKIIALLHDGERVTEVAAGEEAQLLLDVTPFYAESGGEVADSGTITGPDFVLDVKDVQKAPNGQNLHTVVVRTGIALADASVHAAVEASSRQAITKNHTATHLLHKALKDTLGTHVNQAGSLVSAERLRFDFSHFGAVTAEELATIEQDVNQAIWASLAVEIEEMNIADAKAKGAMALFGEKYGETVRVVSAGTYSIELCGGIHVRNTAEIGLFKIVSESGIGAGTRRIEAVTGAGAYHVMNGHLQTLEQAARVLKTKTTEVPGRIEALQVQLRETERAHESLQAKLANIEAASLKDDVEQINGVQVLAKQVDVSDMDALRGMMDELKSSLGSAIIVLGSAQGDKVNLVASVSKDLIDQGYHAGKLIKEVATRCGGGGGGRPDMAQAGGKDPAKLNEALAFTSHYVQSLA.

Residues His568, His572, Cys670, and His674 each coordinate Zn(2+).

This sequence belongs to the class-II aminoacyl-tRNA synthetase family. Requires Zn(2+) as cofactor.

Its subcellular location is the cytoplasm. The catalysed reaction is tRNA(Ala) + L-alanine + ATP = L-alanyl-tRNA(Ala) + AMP + diphosphate. Its function is as follows. Catalyzes the attachment of alanine to tRNA(Ala) in a two-step reaction: alanine is first activated by ATP to form Ala-AMP and then transferred to the acceptor end of tRNA(Ala). Also edits incorrectly charged Ser-tRNA(Ala) and Gly-tRNA(Ala) via its editing domain. This chain is Alanine--tRNA ligase, found in Exiguobacterium sibiricum (strain DSM 17290 / CCUG 55495 / CIP 109462 / JCM 13490 / 255-15).